A 398-amino-acid chain; its full sequence is MMTASQRYDTKIHRRVTRTVMVGDVPIGSEHPIAVQSMINEDTLDIDGSVAGILRLADAGCEIVRVTTPSIGHAKAMGKIRSALRAQGCKIPLVADVHHNGTRIALEVAKHVDKVRINPGLFVFDKPDPDRQEFSKEEFDAIGDRIKETFAPLVQVLKEQNKALRIGVNHGSLAERMLFTYGDTPQGMVESAMEFVRICDSLDFHNIVISMKASRAPVMLAAYRLMADTMDREGFNYPLHLGVTEAGDGDYGRIKSTAGIATLLAEGLGDTLRVSLTEAPEKEIPVCFSILQALGIRKTMVEYVACPSCGRTLFNLEEVLHQVRNATCHLTGLDIAVMGCIVNGPGEMADADYGYVGKGPGVIALYRNRDEIRKVPESEGVEALVQLIKDDGRWVEPD.

The [4Fe-4S] cluster site is built by cysteine 306, cysteine 309, cysteine 340, and glutamate 347.

This sequence belongs to the IspG family. Requires [4Fe-4S] cluster as cofactor.

The enzyme catalyses (2E)-4-hydroxy-3-methylbut-2-enyl diphosphate + 2 oxidized [2Fe-2S]-[ferredoxin] + H2O = 2-C-methyl-D-erythritol 2,4-cyclic diphosphate + 2 reduced [2Fe-2S]-[ferredoxin] + H(+). The protein operates within isoprenoid biosynthesis; isopentenyl diphosphate biosynthesis via DXP pathway; isopentenyl diphosphate from 1-deoxy-D-xylulose 5-phosphate: step 5/6. Its function is as follows. Converts 2C-methyl-D-erythritol 2,4-cyclodiphosphate (ME-2,4cPP) into 1-hydroxy-2-methyl-2-(E)-butenyl 4-diphosphate. This chain is 4-hydroxy-3-methylbut-2-en-1-yl diphosphate synthase (ferredoxin), found in Synechococcus sp. (strain CC9311).